A 105-amino-acid chain; its full sequence is DNA-directed RNA polymerase subunit Rpo13 (105 aa).

Basic and acidic residues-rich tracts occupy residues 1–10 and 70–80; these read MSEDDSKKEP and FDDVARSYSKA. Disordered regions lie at residues 1 to 35 and 70 to 105; these read MSEDDSKKEPEPEETEAEIKHEEISREEDDEGGEF and FDDVARSYSKADKKKRRVEKKPKKGKVTKKSDEEEE. Residues 81-97 show a composition bias toward basic residues; it reads DKKKRRVEKKPKKGKVT.

The protein belongs to the archaeal Rpo13 RNA polymerase subunit family. Part of the 13-subunit RNA polymerase.

The protein localises to the cytoplasm. It catalyses the reaction RNA(n) + a ribonucleoside 5'-triphosphate = RNA(n+1) + diphosphate. Functionally, DNA-dependent RNA polymerase catalyzes the transcription of DNA into RNA using the four ribonucleoside triphosphates as substrates. In vitro binds dsDNA but not ssDNA. This is DNA-directed RNA polymerase subunit Rpo13 from Sulfolobus acidocaldarius (strain ATCC 33909 / DSM 639 / JCM 8929 / NBRC 15157 / NCIMB 11770).